The chain runs to 251 residues: Hydroxyacylglutathione hydrolase (251 aa).

Positions 53, 55, 57, 58, 110, 127, and 165 each coordinate Zn(2+).

Belongs to the metallo-beta-lactamase superfamily. Glyoxalase II family. As to quaternary structure, monomer. The cofactor is Zn(2+).

It carries out the reaction an S-(2-hydroxyacyl)glutathione + H2O = a 2-hydroxy carboxylate + glutathione + H(+). It functions in the pathway secondary metabolite metabolism; methylglyoxal degradation; (R)-lactate from methylglyoxal: step 2/2. Its function is as follows. Thiolesterase that catalyzes the hydrolysis of S-D-lactoyl-glutathione to form glutathione and D-lactic acid. In Salmonella agona (strain SL483), this protein is Hydroxyacylglutathione hydrolase.